Reading from the N-terminus, the 443-residue chain is ATP-dependent protease ATPase subunit HslU (443 aa).

Residues isoleucine 19, 61–66 (GVGKTE), aspartate 256, glutamate 321, and arginine 393 each bind ATP.

It belongs to the ClpX chaperone family. HslU subfamily. As to quaternary structure, a double ring-shaped homohexamer of HslV is capped on each side by a ring-shaped HslU homohexamer. The assembly of the HslU/HslV complex is dependent on binding of ATP.

The protein resides in the cytoplasm. Functionally, ATPase subunit of a proteasome-like degradation complex; this subunit has chaperone activity. The binding of ATP and its subsequent hydrolysis by HslU are essential for unfolding of protein substrates subsequently hydrolyzed by HslV. HslU recognizes the N-terminal part of its protein substrates and unfolds these before they are guided to HslV for hydrolysis. The polypeptide is ATP-dependent protease ATPase subunit HslU (Ralstonia nicotianae (strain ATCC BAA-1114 / GMI1000) (Ralstonia solanacearum)).